The sequence spans 947 residues: Zinc finger protein 268 (947 aa).

The 72-residue stretch at 81–152 (LSFMDVFVDF…QAQVPNQTCP (72 aa)) folds into the KRAB domain. At Ser178 the chain carries Phosphoserine; by TBK1. 24 C2H2-type zinc fingers span residues 276–298 (FGCSCCEKAFSSKSYLLVHQQTH), 304–326 (YGCNECGKDFSSKSYLIVHQRIH), 332–354 (HECSECRKTFSFHSQLVIHQRIH), 360–382 (YECCECGKVFSRKDQLVSHQKTH), 388–410 (YVCNECGKAFGLKSQLIIHERIH), 416–438 (YECNECQKAFNTKSNLMVHQRTH), 444–466 (YVCSDCGKAFTFKSQLIVHQGIH), 472–494 (YGCIQCGKGFSLKSQLIVHQRSH), 500–522 (YVCNECGKAFRSKSYLIIHTRTH), 528–550 (HECNNCGKAFSFKSQLIIHQRIH), 556–578 (YECHECGKAFSRKYQLISHQRTH), 584–606 (YECTDCGKAFGLKSQLIIHQRTH), 612–634 (FECSECQKAFNTKSNLIVHQRTH), 640–662 (YSCNECGKAFTFKSQLIVHKGVH), 668–690 (YGCSQCAKTFSLKSQLIVHQRSH), 696–718 (YGCSECGKAFRSKSYLIIHMRTH), 724–746 (HECRECGKSFSFNSQLIVHQRIH), 752–774 (YECSECGKAFNRKDQLISHQRTH), 780–802 (YGCSECGKAFSSKSYLIIHMRTH), 808–830 (YECNECGKAFIWKSLLIVHERTH), 836–858 (YKCSQCEKSFSGKLRLLVHQRMH), 864–886 (YECSECGKAFIRNSQLIVHQRTH), 892–914 (YGCNECGKTFSQKSILSAHQRTH), and 920–942 (CKCTECGKAFCWKSQLIMHQRTH).

This sequence belongs to the krueppel C2H2-type zinc-finger protein family. As to quaternary structure, interacts (via the KRAB domain) with TRIM28 (via the RBCC domain); the interaction increases ZNF268 nuclear localization activity. Isoform 2 interacts with CHUK and IKBKB; the interaction is further increased in a TNF-alpha-dependent manner. Interacts with TOLLIP; this interaction is impaired by ZNF268 phosphorylation at Ser-178. Forms a ternary complex with TBK1 and SETD4; the interaction between SETD4 and TBK1 is ZNF268-dependent and leads to TBK1 monomethylation. Phosphorylation at Ser-178 stabilizes the protein by interfering with its binding to TOLLIP, hence impairing its degradation by Tollip-mediated selective autophagy system. Overexpressed in ovarian cancer tissues compared to normal ovarian tissues. Isoform 1 and isoform 2 are expressed in squamous epithelium tissues. Isoform 2 is overexpressed in squamous cervical cancer (at protein level). Expressed in blood cells. Isoform 1 is expressed in pancreas, lung, skeletal muscle, heart, placenta, liver, kidney and brain. Isoform 2 expressed in chronic lymphocytic leukemia (CLL) and several tumor cell lines. Isoform 3 is expressed in several tumor cells. Isoform 5 is expressed in fetal liver and several tumor cells. Isoform 6 is weakly expressed in brain, lung amd small intestin and in several tumor cells. Isoform 7 is expressed in fetal liver and several tumor cells.

It localises to the nucleus. It is found in the cytoplasm. Functionally, acts as a transcriptional repressor. Inhibits erythroid differentiation and tumor cell proliferation. Plays a role during ovarian cancer development and progression. Its function is as follows. Contributes to cervical carcinogenesis in part through the TNF-alpha-induced NF-kappa-B signaling pathway by interacting with the I-kappa-B-kinase (IKK) core complex. Involved in the regulation of antiviral interferon signaling. During viral infection, recruits SETD4 to TBK1, leading to TBK1 monomethylation, which is critical for the assembly of TBK1 complex and IRF3 signaling. The sequence is that of Zinc finger protein 268 (ZNF268) from Homo sapiens (Human).